A 347-amino-acid polypeptide reads, in one-letter code: Microtubule-associated protein Jupiter (347 aa).

Positions 1 to 14 (MISNFDCTDNQASS) are enriched in polar residues. A disordered region spans residues 1 to 33 (MISNFDCTDNQASSKVLRPPGGGSSDIFGSEMP). Ser-24 bears the Phosphoserine mark. Phosphothreonine is present on residues Thr-35 and Thr-96. A phosphoserine mark is found at Ser-105, Ser-134, and Ser-145. 2 disordered regions span residues 127–193 (HYNG…PTPP) and 303–347 (GNPV…SGLW). Residues 132–145 (SGSVSSASSSVSSS) are compositionally biased toward low complexity. The segment covering 146-164 (TENLKMNSGSRSVFRNMST) has biased composition (polar residues). Residues 181 to 193 (PPSPVPIEVPTPP) show a composition bias toward pro residues.

This sequence belongs to the MAP Jupiter family.

The protein resides in the nucleus. The protein localises to the cytoplasm. It localises to the cytoskeleton. Its subcellular location is the spindle. Its function is as follows. Binds to all microtubule populations. The protein is Microtubule-associated protein Jupiter of Drosophila yakuba (Fruit fly).